A 729-amino-acid polypeptide reads, in one-letter code: Sodium-dependent neutral amino acid transporter B(0)AT2 (729 aa).

Topologically, residues 1-69 (MPKNSKVVKR…ERPAWNSKLQ (69 aa)) are cytoplasmic. A phosphoserine mark is found at serine 25 and serine 55. Positions 42-61 (DVQEEKDTDAEDGSEADDER) are disordered. Residues 43–59 (VQEEKDTDAEDGSEADD) are compositionally biased toward acidic residues. 3 helical membrane passes run 70 to 90 (YILA…FPYL), 98 to 117 (AYLL…LFFL), and 142 to 162 (GIGF…NVII). Topologically, residues 163–225 (GWTLFYFSQS…SSISDSGGLN (63 aa)) are extracellular. N-linked (GlcNAc...) asparagine glycosylation is present at asparagine 187. The next 2 membrane-spanning stretches (helical) occupy residues 226–244 (WKMT…LAMI) and 253–270 (IMYF…CFLI). N-linked (GlcNAc...) asparagine glycosylation occurs at asparagine 276. A run of 2 helical transmembrane segments spans residues 306 to 323 (VFFA…FSSY) and 335 to 356 (VLVS…FAVL). Residues 357 to 452 (GFKANIVNEK…FIAFTEAMTH (96 aa)) are Extracellular-facing. N-linked (GlcNAc...) asparagine glycosylation is found at asparagine 383 and asparagine 394. A run of 5 helical transmembrane segments spans residues 453–472 (FPAS…NLGL), 496–514 (ILTV…IFVQ), 530–550 (TLPL…VYGI), 571–592 (YMWK…IVNM), and 620–642 (VVCF…IRRC). Over 643–729 (NLIDDSSGNL…DMPDMPESDL (87 aa)) the chain is Cytoplasmic. Phosphoserine is present on residues serine 687, serine 699, and serine 701.

This sequence belongs to the sodium:neurotransmitter symporter (SNF) (TC 2.A.22) family. SLC6A15 subfamily. As to expression, significant expressed in brain, lung and kidney. In brain, mainly expressed int the cortex, the cerebellum and the brain stem.

It is found in the membrane. The enzyme catalyses L-pipecolate(in) + Na(+)(in) = L-pipecolate(out) + Na(+)(out). It carries out the reaction L-leucine(in) + Na(+)(in) = L-leucine(out) + Na(+)(out). It catalyses the reaction L-isoleucine(in) + Na(+)(in) = L-isoleucine(out) + Na(+)(out). The catalysed reaction is L-methionine(in) + Na(+)(in) = L-methionine(out) + Na(+)(out). The enzyme catalyses L-proline(in) + Na(+)(in) = L-proline(out) + Na(+)(out). It carries out the reaction L-alanine(in) + Na(+)(in) = L-alanine(out) + Na(+)(out). It catalyses the reaction L-asparagine(in) + Na(+)(in) = L-asparagine(out) + Na(+)(out). The catalysed reaction is L-valine(in) + Na(+)(in) = L-valine(out) + Na(+)(out). The enzyme catalyses L-cysteine(in) + Na(+)(in) = L-cysteine(out) + Na(+)(out). It carries out the reaction L-glutamine(in) + Na(+)(in) = L-glutamine(out) + Na(+)(out). It catalyses the reaction L-serine(in) + Na(+)(in) = L-serine(out) + Na(+)(out). The catalysed reaction is L-threonine(in) + Na(+)(in) = L-threonine(out) + Na(+)(out). The enzyme catalyses L-phenylalanine(in) + Na(+)(in) = L-phenylalanine(out) + Na(+)(out). Functionally, functions as a sodium-dependent neutral amino acid transporter. Exhibits preference for methionine and for the branched-chain amino acids, particularly leucine, valine and isoleucine. Can also transport low-affinity substrates such as alanine, phenylalanine, glutamine and pipecolic acid. Mediates the saturable, pH-sensitive and electrogenic cotransport of proline and sodium ions with a stoichiometry of 1:1. May have a role as transporter for neurotransmitter precursors into neurons. In contrast to other members of the neurotransmitter transporter family, does not appear to be chloride-dependent. The protein is Sodium-dependent neutral amino acid transporter B(0)AT2 (Slc6a15) of Mus musculus (Mouse).